A 245-amino-acid chain; its full sequence is NADH-quinone oxidoreductase subunit C (245 aa).

Basic and acidic residues predominate over residues 1-10 (MSAPQDRTDD). Disordered regions lie at residues 1–54 (MSAP…GYGG) and 216–245 (PQRKDYPLGGVPVEYKGAEIPPPDRRRSYQ). Over residues 11–28 (GGVPVPVTPAGATGGAPA) the composition is skewed to low complexity. The segment covering 39-54 (GMFGDQGTGDVSGYGG) has biased composition (gly residues).

The protein belongs to the complex I 30 kDa subunit family. As to quaternary structure, NDH-1 is composed of 14 different subunits. Subunits NuoB, C, D, E, F, and G constitute the peripheral sector of the complex.

The protein localises to the cell membrane. It catalyses the reaction a quinone + NADH + 5 H(+)(in) = a quinol + NAD(+) + 4 H(+)(out). Its function is as follows. NDH-1 shuttles electrons from NADH, via FMN and iron-sulfur (Fe-S) centers, to quinones in the respiratory chain. The immediate electron acceptor for the enzyme in this species is believed to be a menaquinone. Couples the redox reaction to proton translocation (for every two electrons transferred, four hydrogen ions are translocated across the cytoplasmic membrane), and thus conserves the redox energy in a proton gradient. The sequence is that of NADH-quinone oxidoreductase subunit C from Salinispora tropica (strain ATCC BAA-916 / DSM 44818 / JCM 13857 / NBRC 105044 / CNB-440).